Here is a 249-residue protein sequence, read N- to C-terminus: Methylthioribulose-1-phosphate dehydratase (249 aa).

Zn(2+) contacts are provided by His103 and His105.

The protein belongs to the aldolase class II family. MtnB subfamily. Zn(2+) serves as cofactor.

It catalyses the reaction 5-(methylsulfanyl)-D-ribulose 1-phosphate = 5-methylsulfanyl-2,3-dioxopentyl phosphate + H2O. The protein operates within amino-acid biosynthesis; L-methionine biosynthesis via salvage pathway; L-methionine from S-methyl-5-thio-alpha-D-ribose 1-phosphate: step 2/6. In terms of biological role, catalyzes the dehydration of methylthioribulose-1-phosphate (MTRu-1-P) into 2,3-diketo-5-methylthiopentyl-1-phosphate (DK-MTP-1-P). In Leptospira interrogans serogroup Icterohaemorrhagiae serovar Lai (strain 56601), this protein is Methylthioribulose-1-phosphate dehydratase.